A 70-amino-acid chain; its full sequence is Virion membrane protein OPG139 (70 aa).

The helical transmembrane segment at 1–21 threads the bilayer; it reads MIGILLLIGICVAVTVAILYS. The Virion surface segment spans residues 22–70; sequence MYNKIKNSQNPNPSPNLNSPPPEPKNTKFVNNLEKDHISSLYNLVKSSV. Residues 30–50 form a disordered region; it reads QNPNPSPNLNSPPPEPKNTKF. The span at 33–45 shows a compositional bias: pro residues; sequence NPSPNLNSPPPEP. S40 carries the phosphoserine; by host modification.

It belongs to the orthopoxvirus OPG139 family. In terms of processing, phosphorylated by a OPG054-independent mechanism.

The protein localises to the virion membrane. Its function is as follows. Essential for the encapsidation of DNA into immature virions (IV) and the subsequent maturation of IV into mature virions (MV). The chain is Virion membrane protein OPG139 (OPG139) from Homo sapiens (Human).